The following is a 678-amino-acid chain: MAAVKSCVEEEKIDCDLDFDKVIDVQLDDNHCAKLKAGYESLLSRGALTVTEADFTPNETAESEFFLSLLNSASTKREAKSYLARLKAQHPPKAQTEPTTGHSKGTVTQSLPSGVNLGSFYGASRSVYDSPVFRHDSTPLPPPSELPEERLHLALIKIRTPQLLDDTIINGVAKTLSQLSRLGMACCVVVDPGTAGNANTLRRVAAEQAERISIAVDAQPDSKSAHLDSVLSLSPMFPELPTVLSRKALLNPLRDGQIVVVAPIAYTEDVPKAVTISANDAILALTKELAGLAMRPDPDEDPWLTAQKIAKLQKEVSLDRVILLDPLGGIPSFRGPQTSHVFINMEQEFDDIKNELLHVQSSEACTATTPKGGNTFVEDPLERHLDNLQLSQNVLAMLPSASSGIITSPLEVSNSARTPQANPSDVSAVGTRRQRNPLIHNLLTDKPLLSSSLPMSRREAMNRRRGSINTPSSHTTFVKRGMPLTMIPNPRVEVWTAQNRPRLSLDDPSIDLPRLVQLIEDSFNRKLDVQDYLNRVNDRLAGLIIAGEYEGGAILTWELPPGVEDDGSPASEARMVPYLDKFAVLKRSQGAGGVADIVFNAMVRSCFPNGVCWRSRKDNPVNKWYFERSTGTWKLSDTNWTMFWTTPGLTENSQRFSDYEQVCRSIQPSWADDTGVVD.

The segment at 86–111 (LKAQHPPKAQTEPTTGHSKGTVTQSL) is disordered. Over residues 96 to 111 (TEPTTGHSKGTVTQSL) the composition is skewed to polar residues. Residues 499–668 (NRPRLSLDDP…YEQVCRSIQP (170 aa)) form the N-acetyltransferase domain.

This sequence belongs to the acetyltransferase family.

It localises to the mitochondrion. It carries out the reaction L-glutamate + acetyl-CoA = N-acetyl-L-glutamate + CoA + H(+). It participates in amino-acid biosynthesis; L-arginine biosynthesis; N(2)-acetyl-L-ornithine from L-glutamate: step 1/4. Functionally, N-acetylglutamate synthase involved in arginine biosynthesis. This chain is Amino-acid acetyltransferase, mitochondrial (arg2), found in Aspergillus oryzae (strain ATCC 42149 / RIB 40) (Yellow koji mold).